Reading from the N-terminus, the 70-residue chain is Large ribosomal subunit protein bL31 (70 aa).

Zn(2+) is bound by residues Cys16, Cys18, Cys37, and Cys40.

Belongs to the bacterial ribosomal protein bL31 family. Type A subfamily. Part of the 50S ribosomal subunit. The cofactor is Zn(2+).

Functionally, binds the 23S rRNA. The protein is Large ribosomal subunit protein bL31 of Shewanella oneidensis (strain ATCC 700550 / JCM 31522 / CIP 106686 / LMG 19005 / NCIMB 14063 / MR-1).